A 258-amino-acid chain; its full sequence is Dihydroorotate dehydrogenase B (NAD(+)), electron transfer subunit (258 aa).

The FAD-binding FR-type domain maps to 2–100; that stretch reads ILKENLTVVS…LGPQGNGFDL (99 aa). Residues 51–54, 68–70, and 75–76 contribute to the FAD site; these read RPIS, IYR, and GT. Residues C220, C225, C228, and C244 each coordinate [2Fe-2S] cluster.

The protein belongs to the PyrK family. In terms of assembly, heterotetramer of 2 PyrK and 2 PyrD type B subunits. [2Fe-2S] cluster serves as cofactor. It depends on FAD as a cofactor.

Its pathway is pyrimidine metabolism; UMP biosynthesis via de novo pathway; orotate from (S)-dihydroorotate (NAD(+) route): step 1/1. Its function is as follows. Responsible for channeling the electrons from the oxidation of dihydroorotate from the FMN redox center in the PyrD type B subunit to the ultimate electron acceptor NAD(+). In Streptococcus mutans serotype c (strain ATCC 700610 / UA159), this protein is Dihydroorotate dehydrogenase B (NAD(+)), electron transfer subunit.